The following is a 170-amino-acid chain: Small ribosomal subunit protein mS25 (170 aa).

This sequence belongs to the mitochondrion-specific ribosomal protein mS25 family. In terms of assembly, component of the mitochondrial ribosome small subunit (28S) which comprises a 12S rRNA and about 30 distinct proteins.

It localises to the mitochondrion. This Caenorhabditis elegans protein is Small ribosomal subunit protein mS25 (mrps-25).